The primary structure comprises 617 residues: Probable potassium transport system protein Kup 3 (617 aa).

11 consecutive transmembrane segments (helical) span residues 42–62 (VASLILWALLLIISLKYALLI), 95–115 (LVVGLVGAALLYGDGAITPAI), 129–149 (PSLAPAVVPVTVVILVGLFMM), 160–180 (IFGPVMLAWFAVLAALGIHGI), 206–226 (VSFAILGAAFLAVTGGEAMYA), 240–260 (WFAICLPALVLNYFGQAALLI), 282–302 (LVAFSAVATVIASQAIISGVF), 330–350 (IYVPLVNWLLAAATLGAVLSF), 360–380 (YGIAVSLLMAITTLLAALVAI), 386–406 (PWLVVAVNGAFFVIDVIFFSA), and 411–431 (LFEGGWFPLLLAALVAFMMLT).

The protein belongs to the HAK/KUP transporter (TC 2.A.72) family.

The protein localises to the cell inner membrane. The catalysed reaction is K(+)(in) + H(+)(in) = K(+)(out) + H(+)(out). Its function is as follows. Transport of potassium into the cell. Likely operates as a K(+):H(+) symporter. The sequence is that of Probable potassium transport system protein Kup 3 from Bradyrhizobium diazoefficiens (strain JCM 10833 / BCRC 13528 / IAM 13628 / NBRC 14792 / USDA 110).